The sequence spans 357 residues: UPF0283 membrane protein BMEI0952 (357 aa).

Residues M1–K36 are disordered. Over residues E27–K36 the composition is skewed to basic and acidic residues. 2 helical membrane passes run I78–L98 and L109–L129.

Belongs to the UPF0283 family.

Its subcellular location is the cell inner membrane. This chain is UPF0283 membrane protein BMEI0952, found in Brucella melitensis biotype 1 (strain ATCC 23456 / CCUG 17765 / NCTC 10094 / 16M).